The primary structure comprises 504 residues: Maturase K (504 aa).

Belongs to the intron maturase 2 family. MatK subfamily.

Its subcellular location is the plastid. The protein localises to the chloroplast. Usually encoded in the trnK tRNA gene intron. Probably assists in splicing its own and other chloroplast group II introns. The protein is Maturase K of Cynophalla hastata (Broadleaf caper).